The sequence spans 71 residues: Ubiquinol-cytochrome c reductase complex assembly factor 6 (71 aa).

The Mitochondrial matrix segment spans residues 1-8 (MPAGVPMS). A helical; Signal-anchor for type II membrane protein membrane pass occupies residues 9–25 (TYLKMLAASLLAMCAGA). The Mitochondrial intermembrane segment spans residues 26-71 (EVVHRYYRPDLTIPEIPPKRGELKTELLGLKERKHKPQISQQEELK). The disordered stretch occupies residues 52-71 (LLGLKERKHKPQISQQEELK).

Belongs to the UQCC6 family. As to quaternary structure, interacts with UQCRC1. Interacts with UQCRQ. Interacts with UQCC5. Forms a complex, named COMB/coordinator of mitochondrial CYTB biogenesis, composed of UQCC1, UQCC2, UQCC4, UQCC5 and UQCC6; stabilizes nascent cytochrome b/MT-CYB and promotes its membrane insertion. Forms a complex, named COMA, composed of UQCC1, UQCC2 and UQCC4; activates MT-CYB translation. Forms a complex, named COMC, composed of UQCC1, UQCC2; UQCC3 and UQCC4; mediates MT-CYB hemylation and association with the first nuclear-encoded complex III subunit UQCRQ. Interacts with MT-CYB.

The protein resides in the mitochondrion inner membrane. In terms of biological role, required for the assembly and stability of the mitochondrial ubiquinol-cytochrome c reductase complex (complex III (CIII) or cytochrome b-c1 complex), a multisubunit transmembrane complex that is part of the mitochondrial electron transport chain (ETC) which drives oxidative phosphorylation. Mediates early complex III biogenesis. Participates in regulating the levels of electron transport chain proteins, and therefore energy supply, in response to changes in energy demand. Also required for cytochrome c oxidase complex (complex IV) assembly. The sequence is that of Ubiquinol-cytochrome c reductase complex assembly factor 6 from Pongo abelii (Sumatran orangutan).